Consider the following 739-residue polypeptide: Phosphoribosylformylglycinamidine synthase subunit PurL (739 aa).

H53 is an active-site residue. The ATP site is built by Y56 and K95. E97 is a binding site for Mg(2+). Substrate-binding positions include 98 to 101 and R120; that span reads SHNH. Residue H99 is the Proton acceptor of the active site. D121 contributes to the Mg(2+) binding site. Residue Q244 coordinates substrate. D274 lines the Mg(2+) pocket. 318-320 is a substrate binding site; it reads ESQ. ATP is bound by residues D501 and G538. N539 lines the Mg(2+) pocket. Residue S541 participates in substrate binding.

Belongs to the FGAMS family. Monomer. Part of the FGAM synthase complex composed of 1 PurL, 1 PurQ and 2 PurS subunits.

It is found in the cytoplasm. It carries out the reaction N(2)-formyl-N(1)-(5-phospho-beta-D-ribosyl)glycinamide + L-glutamine + ATP + H2O = 2-formamido-N(1)-(5-O-phospho-beta-D-ribosyl)acetamidine + L-glutamate + ADP + phosphate + H(+). It participates in purine metabolism; IMP biosynthesis via de novo pathway; 5-amino-1-(5-phospho-D-ribosyl)imidazole from N(2)-formyl-N(1)-(5-phospho-D-ribosyl)glycinamide: step 1/2. Part of the phosphoribosylformylglycinamidine synthase complex involved in the purines biosynthetic pathway. Catalyzes the ATP-dependent conversion of formylglycinamide ribonucleotide (FGAR) and glutamine to yield formylglycinamidine ribonucleotide (FGAM) and glutamate. The FGAM synthase complex is composed of three subunits. PurQ produces an ammonia molecule by converting glutamine to glutamate. PurL transfers the ammonia molecule to FGAR to form FGAM in an ATP-dependent manner. PurS interacts with PurQ and PurL and is thought to assist in the transfer of the ammonia molecule from PurQ to PurL. This chain is Phosphoribosylformylglycinamidine synthase subunit PurL, found in Listeria monocytogenes serotype 4b (strain F2365).